Here is an 865-residue protein sequence, read N- to C-terminus: Envelope glycoprotein gp160 (865 aa).

The signal sequence occupies residues 1–20; it reads MRYTIITLGIIVIGIGIVLS. Over 21 to 705 the chain is Extracellular; it reads KQWITVFYGI…SKWLNILKMG (685 aa). N-linked (GlcNAc...) asparagine; by host glycosylation occurs at N35. C42 and C55 are oxidised to a cystine. 20 N-linked (GlcNAc...) asparagine; by host glycosylation sites follow: N68, N117, N150, N165, N195, N198, N210, N252, N255, N266, N276, N282, N294, N306, N316, N373, N414, N451, N488, and N491. Cystine bridges form between C101–C218, C108–C209, C113–C166, C231–C261, and C241–C253. Residues 113–165 are V1; that stretch reads CVELNSTRERATTPTTTPKSTGLPCVGPTSGENLQSCNASIIEREMEDEPASN. Residues 166 to 209 are V2; it reads CTFAMAGYVRDQKKNYYSVVWNDAEIYCKNKTNSTSKECYMIHC. Positions 311–343 are V3; it reads CRRPGNKTVLPVTIMAGLVFHSQKYNMKLRQAW. C311 and C344 are oxidised to a cystine. A disulfide bridge links C396 with C471. The tract at residues 403–444 is V4; it reads CKMDWFLNYLNNKTWDAYHNFCSSKKKGHAPGPCVQRTYVAY. The interval 487–494 is V5; the sequence is KNRTNVTL. The tract at residues 537-557 is fusion peptide; it reads VPFVLGFLGFLGAAGTAMGAA. Positions 600–616 are immunosuppression; it reads LNARVTALEKYLEDQAR. N-linked (GlcNAc...) asparagine; by host glycosylation is found at N645 and N661. The stretch at 650 to 675 forms a coiled coil; the sequence is EWERQIADLESNITGQLVKAREQEEK. The interval 682–703 is MPER; binding to GalCer; the sequence is KLTSWSDFWSWFDFSKWLNILK. Residues 706 to 726 form a helical membrane-spanning segment; the sequence is FLVIVGIIGLRLLYTVYGCIV. Topologically, residues 727–865 are cytoplasmic; sequence RVRQGYVPLS…VRQGLEEILN (139 aa). A YXXL motif; contains endocytosis signal motif is present at residues 732 to 735; it reads YVPL. A disordered region spans residues 744–763; the sequence is VGKGRPDNADEPGEGGDNSR.

As to quaternary structure, the mature envelope protein (Env) consists of a homotrimer of non-covalently associated gp120-gp41 heterodimers. The resulting complex protrudes from the virus surface as a spike. Interacts with host CD4 and CCR5. Gp120 also interacts with the C-type lectins CD209/DC-SIGN and CLEC4M/DC-SIGNR (collectively referred to as DC-SIGN(R)). The mature envelope protein (Env) consists of a homotrimer of non-covalently associated gp120-gp41 heterodimers. The resulting complex protrudes from the virus surface as a spike. Post-translationally, specific enzymatic cleavages in vivo yield mature proteins. Envelope glycoproteins are synthesized as an inactive precursor that is heavily N-glycosylated and processed likely by host cell furin in the Golgi to yield the mature SU and TM proteins. The cleavage site between SU and TM requires the minimal sequence [KR]-X-[KR]-R.

Its subcellular location is the virion membrane. The protein resides in the host cell membrane. It localises to the host endosome membrane. In terms of biological role, the surface protein gp120 (SU) attaches the virus to the host lymphoid cell by binding to the primary receptor CD4. This interaction induces a structural rearrangement creating a high affinity binding site for a chemokine coreceptor like CCR5. This peculiar 2 stage receptor-interaction strategy allows gp120 to maintain the highly conserved coreceptor-binding site in a cryptic conformation, protected from neutralizing antibodies. These changes are transmitted to the transmembrane protein gp41 and are thought to activate its fusogenic potential by unmasking its fusion peptide. Its function is as follows. Surface protein gp120 (SU) may target the virus to gut-associated lymphoid tissue (GALT) by binding host ITGA4/ITGB7 (alpha-4/beta-7 integrins), a complex that mediates T-cell migration to the GALT. Interaction between gp120 and ITGA4/ITGB7 would allow the virus to enter GALT early in the infection, infecting and killing most of GALT's resting CD4+ T-cells. This T-cell depletion is believed to be the major insult to the host immune system leading to AIDS. Functionally, the surface protein gp120 is a ligand for CD209/DC-SIGN and CLEC4M/DC-SIGNR, which are respectively found on dendritic cells (DCs), and on endothelial cells of liver sinusoids and lymph node sinuses. These interactions allow capture of viral particles at mucosal surfaces by these cells and subsequent transmission to permissive cells. DCs are professional antigen presenting cells, critical for host immunity by inducing specific immune responses against a broad variety of pathogens. They act as sentinels in various tissues where they take up antigen, process it, and present it to T-cells following migration to lymphoid organs. SIV subverts the migration properties of dendritic cells to gain access to CD4+ T-cells in lymph nodes. Virus transmission to permissive T-cells occurs either in trans (without DCs infection, through viral capture and transmission), or in cis (following DCs productive infection, through the usual CD4-gp120 interaction), thereby inducing a robust infection. In trans infection, bound virions remain infectious over days and it is proposed that they are not degraded, but protected in non-lysosomal acidic organelles within the DCs close to the cell membrane thus contributing to the viral infectious potential during DCs' migration from the periphery to the lymphoid tissues. On arrival at lymphoid tissues, intact virions recycle back to DCs' cell surface allowing virus transmission to CD4+ T-cells. Virion capture also seems to lead to MHC-II-restricted viral antigen presentation, and probably to the activation of SIV-specific CD4+ cells. The transmembrane protein gp41 (TM) acts as a class I viral fusion protein. Under the current model, the protein has at least 3 conformational states: pre-fusion native state, pre-hairpin intermediate state, and post-fusion hairpin state. During fusion of viral and target intracellular membranes, the coiled coil regions (heptad repeats) assume a trimer-of-hairpins structure, positioning the fusion peptide in close proximity to the C-terminal region of the ectodomain. The formation of this structure appears to drive apposition and subsequent fusion of viral and target cell membranes. Complete fusion occurs in host cell endosomes. The virus undergoes clathrin-dependent internalization long before endosomal fusion, thus minimizing the surface exposure of conserved viral epitopes during fusion and reducing the efficacy of inhibitors targeting these epitopes. Membranes fusion leads to delivery of the nucleocapsid into the cytoplasm. In terms of biological role, the envelope glycoprotein gp160 precursor down-modulates cell surface CD4 antigen by interacting with it in the endoplasmic reticulum and blocking its transport to the cell surface. Its function is as follows. The gp120-gp41 heterodimer allows rapid transcytosis of the virus through CD4 negative cells such as simple epithelial monolayers of the intestinal, rectal and endocervical epithelial barriers. Both gp120 and gp41 specifically recognize glycosphingolipids galactosyl-ceramide (GalCer) or 3' sulfo-galactosyl-ceramide (GalS) present in the lipid rafts structures of epithelial cells. Binding to these alternative receptors allows the rapid transcytosis of the virus through the epithelial cells. This transcytotic vesicle-mediated transport of virions from the apical side to the basolateral side of the epithelial cells does not involve infection of the cells themselves. The sequence is that of Envelope glycoprotein gp160 (env) from Simian immunodeficiency virus agm.vervet (isolate AGM TYO-1) (SIV-agm.ver).